We begin with the raw amino-acid sequence, 556 residues long: Potassium-transporting ATPase potassium-binding subunit (556 aa).

10 helical membrane passes run 6-26 (AGLI…VPLG), 65-85 (GVLA…LVQG), 133-153 (GLAV…VALV), 176-196 (LRIL…GGAI), 249-269 (PTAW…FSLP), 283-303 (YAIA…MLWF), 378-398 (GLYG…LMVG), 419-439 (YFLV…ALPG), 483-503 (ALGL…LALA), and 526-546 (FVGM…LPML).

This sequence belongs to the KdpA family. As to quaternary structure, the system is composed of three essential subunits: KdpA, KdpB and KdpC.

It localises to the cell membrane. Its function is as follows. Part of the high-affinity ATP-driven potassium transport (or Kdp) system, which catalyzes the hydrolysis of ATP coupled with the electrogenic transport of potassium into the cytoplasm. This subunit binds the extracellular potassium ions and delivers the ions to the membrane domain of KdpB through an intramembrane tunnel. In Mycolicibacterium paratuberculosis (strain ATCC BAA-968 / K-10) (Mycobacterium paratuberculosis), this protein is Potassium-transporting ATPase potassium-binding subunit.